The primary structure comprises 526 residues: NAD(P)H-quinone oxidoreductase chain 4 (526 aa).

Transmembrane regions (helical) follow at residues 5-25, 32-52, 87-107, 111-131, 133-153, 165-185, 211-231, 239-259, 273-293, 302-320, 331-351, 371-393, and 414-434; these read FPWLTVIILLPLVAALAVPLI, WYSFAVCLVDFVLMVAAFFTS, LILLTGFITALATLAAWPVTL, MFHFLMLAMLAGMVGVFAVQD, VLFFLFFELELVPVYLMLAIW, FILYTAVGSLFILVVGLAMYF, FLGLLIAYAVKLPIFPLHTWL, TAPVHMLLAGILLKMGGYALI, FAPLLIVLGIVNIIYAALTSF, IAYSSISHMGFVLIGVGSL, QMISHGLIGASLFFLVGATYD, IFAMFTACSMASLALPGMSGFVA, and LVVLFAAFGVILTPIYLLSML.

It belongs to the complex I subunit 4 family.

The protein resides in the cell inner membrane. The enzyme catalyses a plastoquinone + NADH + (n+1) H(+)(in) = a plastoquinol + NAD(+) + n H(+)(out). It catalyses the reaction a plastoquinone + NADPH + (n+1) H(+)(in) = a plastoquinol + NADP(+) + n H(+)(out). In terms of biological role, NDH-1 shuttles electrons from NAD(P)H, via FMN and iron-sulfur (Fe-S) centers, to quinones in the respiratory chain. The immediate electron acceptor for the enzyme in this species is believed to be plastoquinone. Couples the redox reaction to proton translocation (for every two electrons transferred, four hydrogen ions are translocated across the cytoplasmic membrane), and thus conserves the redox energy in a proton gradient. The sequence is that of NAD(P)H-quinone oxidoreductase chain 4 from Gloeobacter violaceus (strain ATCC 29082 / PCC 7421).